The sequence spans 497 residues: ADP-dependent glucokinase (497 aa).

Positions 1 to 22 (MALWRGSAYAGFLALAVGCVFL) are cleaved as a signal peptide. The 446-residue stretch at 52–497 (SPEGRLAAAW…LFYSEVHPHL (446 aa)) folds into the ADPK domain. The Mg(2+) site is built by glutamate 297, glutamate 328, and aspartate 481. Residue aspartate 481 is the Proton acceptor of the active site.

It belongs to the ADP-dependent glucokinase family. As to quaternary structure, monomer. Mg(2+) serves as cofactor.

It is found in the secreted. It catalyses the reaction D-glucose + ADP = D-glucose 6-phosphate + AMP + H(+). The protein operates within carbohydrate degradation; glycolysis. Catalyzes the phosphorylation of D-glucose to D-glucose 6-phosphate using ADP as the phosphate donor. GDP and CDP can replace ADP, but with reduced efficiency. In Bos taurus (Bovine), this protein is ADP-dependent glucokinase (ADPGK).